The chain runs to 75 residues: MKRDRGRRKKKICSFCVDKIAVIDYKDTPRLKKYITERGKILPRRITGNCAHHQRMLTVSIKRSRHMALLPFSTD.

Belongs to the bacterial ribosomal protein bS18 family. As to quaternary structure, part of the 30S ribosomal subunit. Forms a tight heterodimer with protein bS6.

Binds as a heterodimer with protein bS6 to the central domain of the 16S rRNA, where it helps stabilize the platform of the 30S subunit. In Desulforudis audaxviator (strain MP104C), this protein is Small ribosomal subunit protein bS18.